The chain runs to 466 residues: Hydroxyproline dehydrogenase (466 aa).

It belongs to the proline oxidase family. FAD serves as cofactor.

The catalysed reaction is trans-4-hydroxy-L-proline + a quinone = (3R,5S)-1-pyrroline-3-hydroxy-5-carboxylate + a quinol + H(+). The enzyme catalyses L-proline + a quinone = (S)-1-pyrroline-5-carboxylate + a quinol + H(+). It functions in the pathway amino-acid degradation; L-proline degradation into L-glutamate; L-glutamate from L-proline: step 1/2. Its function is as follows. Dehydrogenase that converts trans-4-L-hydroxyproline to delta-1-pyrroline-3-hydroxy-5-carboxylate (Hyp) using a quinone as the terminal electron acceptor. Can also use proline as a substrate but with a very much lower efficiency. Does not react with other diastereomers of Hyp: trans-4-D-hydroxyproline and cis-4-L-hydroxyproline. The polypeptide is Hydroxyproline dehydrogenase (prodh2) (Xenopus laevis (African clawed frog)).